The primary structure comprises 109 residues: Large ribosomal subunit protein uL22 (109 aa).

The protein belongs to the universal ribosomal protein uL22 family. As to quaternary structure, part of the 50S ribosomal subunit.

In terms of biological role, this protein binds specifically to 23S rRNA; its binding is stimulated by other ribosomal proteins, e.g. L4, L17, and L20. It is important during the early stages of 50S assembly. It makes multiple contacts with different domains of the 23S rRNA in the assembled 50S subunit and ribosome. Functionally, the globular domain of the protein is located near the polypeptide exit tunnel on the outside of the subunit, while an extended beta-hairpin is found that lines the wall of the exit tunnel in the center of the 70S ribosome. This chain is Large ribosomal subunit protein uL22, found in Methylibium petroleiphilum (strain ATCC BAA-1232 / LMG 22953 / PM1).